A 295-amino-acid polypeptide reads, in one-letter code: Tyrosine transport system permease protein (295 aa).

A run of 8 helical transmembrane segments spans residues 3 to 23, 57 to 77, 81 to 101, 122 to 142, 173 to 193, 200 to 220, 232 to 252, and 256 to 276; these read GIIS…GVYI, VVAT…TGIL, FKIS…SINL, ISPI…LDLF, ILGL…MAQF, NMGI…ITLF, IIVG…LGML, and LKLI…LNIS.

It belongs to the binding-protein-dependent transport system permease family. As to quaternary structure, the complex is probably composed of two ATP-binding proteins (CDR20291_0806), two transmembrane proteins (CDR20291_0807) and a solute-binding protein (CDR20291_0805).

The protein localises to the cell membrane. Functionally, probably part of an ABC transporter complex involved in tyrosine uptake. May also import phenylalanine. Probably responsible for the translocation of the substrate across the membrane. In Clostridioides difficile (strain R20291) (Peptoclostridium difficile), this protein is Tyrosine transport system permease protein.